A 1567-amino-acid polypeptide reads, in one-letter code: MSFEVGTRCWYPSKEQGWIGAEVTKNDLKDGTYFMELTLEDNEVVNVETKDLTNEKDPSLPLLRNPPILESTEDLTTLSYLNEPAVLHAIKQRYSQLNIYTYSGIVLIATNPFDRMDQLYSQDMIQAYSGKRRGEIEPHLFAIAEEAYRLMKNDKQNQTIVVSGESGAGKTVSAKYIMRYFASCDEENSSNMGNLQHTAEMSETEERILATNPIMEAFGNAKTTRNDNSSRFGKYLEILFDKETAIIGAKMRTYLLERSRLVYQPKTERNYHIFYQILAGLPEDVKQELHLTKADDYFYMNQGGEPEIAGIDDVSEYGITIKALTLVGVAPETQQHIFKILAALLHIGNIEIKKTRNDSSLSSDEPNLKIACELLGVDPSNFAKWITKKQIVTRSEKIVSNLNYSQALVARDSVAKFIYSALFDWLVTNINTVLCNPAVLDQIHSFIGVLDIYGFEHFEKNSFEQFCINYANEKLQQEFNQHVFKLEQEEYIKEEIEWSFIEFNDNQPCIDLIENKLGILSLLDEESRLPAGSDESWTQKLYQTLDKPPTNKVFSKPRFGQTKFVVSHYALDVAYDVEGFIEKNRDTVSDGHLEVLKATTNDTLSTILESVEESARKVEEAKKNAASQDQKQLKKPTPIRQVQRKPTLGSMFKLSLIELMQTINSTNVHYIRCIKPNGEKEAWKFDNLMVLSQLRACGVLETIRISCAGFPSRWTFNEFILRYYILIPPVEWAPIFQKNDLTEQDVINLCKKILAATVQDKEKYQIGNTKIFFKAGMLAYFEKLRSTKMNSAIVLIQKHIRSKYYRKQYMLMKASLSLLGAYSKGTVIRQRVEYELEQHAATLIQTMYRGYSKRSYISGVISSIVKLQSRIREELEQREMQSKYESNAAISIQSRIRAFVPRKAYESKRRDTIVVQSLIRRRIAQRDFKKLKADAKSVHHLKEVSYKLENKVIQLTQNLAAKVKENRQLSKRLEELQATMVTVSELQDQLEAQKMENQKALADQKDGFVLDSKSLKDQLIKANKDVESVKFELATLTAKYTEMEAESKNQLDELERTKTLLTESKTQNSDLYSEIKSLKEELAHLQTSIALGTVTTNTNIVPHTPSRENRMPSGHMRAAEENISPNQLKSIPSDTAADHVSVNGYGMDDDIINTNTLTQINEELYRLLEGTDVLNNEITEGLLKGFQVPDAGVAIQLSRRDVVYPARILIIVLSEMWRFGLTKQSESFLAQVLTTIQKVVTTLKGIDLIPSGAFWLANVRELYSFVVFAQHSILTEESFKKGMNDEEYNEYVSLVTELKEDFESLSYNIYNIWLKKLQKDLQKKAINAVVVSESLPGFNASESNGFLNKIFNSGEEYTMDDILTFFNNIFWCMKSFHIENEVFRTVIITLLNYVDTICFNDLIMKRNFLSWKRGLQLNYNVTRLEEWCKTHGLPDGAQYLQHLIQTAKLLQLRKYTIEDIDMVRGICSSLSPAQLQKLISQYHVADYESPIPQDILKYVADIVKKESTSAHNDIFLHPETGPFNDPFVAVKTRKFDQVEAYIPSWLVLPVTKRIVDLVAQQVTVPDA.

The region spanning 4–57 (EVGTRCWYPSKEQGWIGAEVTKNDLKDGTYFMELTLEDNEVVNVETKDLTNEKD) is the Myosin N-terminal SH3-like domain. A Myosin motor domain is found at 70–786 (ESTEDLTTLS…MLAYFEKLRS (717 aa)). 164–171 (GESGAGKT) serves as a coordination point for ATP. Residues 446–526 (FIGVLDIYGF…LGILSLLDEE (81 aa)) form an actin-binding region. A disordered region spans residues 619-640 (EEAKKNAASQDQKQLKKPTPIR). IQ domains follow at residues 789-818 (MNSA…SLSL), 812-836 (MKAS…EYEL), 837-859 (EQHA…YISG), 860-884 (VISS…QSKY), 885-907 (ESNA…AYES), and 908-937 (KRRD…DAKS). A coiled-coil region spans residues 947–1091 (KLENKVIQLT…LAHLQTSIAL (145 aa)). Positions 1092–1567 (GTVTTNTNIV…VAQQVTVPDA (476 aa)) are non alpha-helical, tail domain. The 276-residue stretch at 1230–1505 (AQVLTTIQKV…LKYVADIVKK (276 aa)) folds into the Dilute domain.

The protein belongs to the TRAFAC class myosin-kinesin ATPase superfamily. Myosin family. Homodimer. Interacts with calmodulin (CMD1) and the myosin light chain MLC1 through its IQ repeats.

In terms of biological role, myosin heavy chain that is required for the cell cycle-regulated transport of various organelles and proteins for their segregation. Functions by binding with its tail domain to receptor proteins on organelles and exerting force with its N-terminal motor domain against actin filaments, thereby transporting its cargo along polarized actin cables. The chain is Myosin-2A (MYO2A) from Naumovozyma castellii (Yeast).